The sequence spans 310 residues: Putative type II methyltransferase M.MJ0563P (310 aa).

The SAM-dependent MTase C5-type domain occupies 1 to 310 (MNVIDLFSGC…AIAKEIKKQL (310 aa)). Residue Cys77 is part of the active site.

It belongs to the class I-like SAM-binding methyltransferase superfamily. C5-methyltransferase family.

It catalyses the reaction a 2'-deoxycytidine in DNA + S-adenosyl-L-methionine = a 5-methyl-2'-deoxycytidine in DNA + S-adenosyl-L-homocysteine + H(+). Its function is as follows. A putative methylase that may protect DNA from cleavage by an unknown endonuclease. This is Putative type II methyltransferase M.MJ0563P from Methanocaldococcus jannaschii (strain ATCC 43067 / DSM 2661 / JAL-1 / JCM 10045 / NBRC 100440) (Methanococcus jannaschii).